The primary structure comprises 549 residues: Maturase K (549 aa).

This sequence belongs to the intron maturase 2 family. MatK subfamily.

It is found in the plastid. It localises to the chloroplast. Its function is as follows. Usually encoded in the trnK tRNA gene intron. Probably assists in splicing its own and other chloroplast group II introns. The sequence is that of Maturase K from Albidella oligococca (Caldesia oligococca).